The primary structure comprises 608 residues: Elongation factor 4 (608 aa).

Positions 11-193 (KKIRNFSIIA…QIVEKVPEPS (183 aa)) constitute a tr-type G domain. Residues 23-28 (DHGKST) and 140-143 (NKID) contribute to the GTP site.

This sequence belongs to the TRAFAC class translation factor GTPase superfamily. Classic translation factor GTPase family. LepA subfamily.

Its subcellular location is the cell membrane. The catalysed reaction is GTP + H2O = GDP + phosphate + H(+). Its function is as follows. Required for accurate and efficient protein synthesis under certain stress conditions. May act as a fidelity factor of the translation reaction, by catalyzing a one-codon backward translocation of tRNAs on improperly translocated ribosomes. Back-translocation proceeds from a post-translocation (POST) complex to a pre-translocation (PRE) complex, thus giving elongation factor G a second chance to translocate the tRNAs correctly. Binds to ribosomes in a GTP-dependent manner. This chain is Elongation factor 4, found in Listeria monocytogenes serotype 4b (strain CLIP80459).